We begin with the raw amino-acid sequence, 184 residues long: ATP synthase subunit delta (184 aa).

Belongs to the ATPase delta chain family. As to quaternary structure, F-type ATPases have 2 components, F(1) - the catalytic core - and F(0) - the membrane proton channel. F(1) has five subunits: alpha(3), beta(3), gamma(1), delta(1), epsilon(1). F(0) has three main subunits: a(1), b(2) and c(10-14). The alpha and beta chains form an alternating ring which encloses part of the gamma chain. F(1) is attached to F(0) by a central stalk formed by the gamma and epsilon chains, while a peripheral stalk is formed by the delta and b chains.

The protein localises to the cell inner membrane. Its function is as follows. F(1)F(0) ATP synthase produces ATP from ADP in the presence of a proton or sodium gradient. F-type ATPases consist of two structural domains, F(1) containing the extramembraneous catalytic core and F(0) containing the membrane proton channel, linked together by a central stalk and a peripheral stalk. During catalysis, ATP synthesis in the catalytic domain of F(1) is coupled via a rotary mechanism of the central stalk subunits to proton translocation. Functionally, this protein is part of the stalk that links CF(0) to CF(1). It either transmits conformational changes from CF(0) to CF(1) or is implicated in proton conduction. The protein is ATP synthase subunit delta of Rickettsia rickettsii (strain Iowa).